The chain runs to 781 residues: Protein translocase subunit SecA 2 (781 aa).

Residues Q85, 103–107 (GEGKT), and D491 contribute to the ATP site.

This sequence belongs to the SecA family. As to quaternary structure, monomer and homodimer. Part of the essential Sec protein translocation apparatus which comprises SecA, SecYEG and auxiliary proteins SecDF. Other proteins may also be involved.

It is found in the cell membrane. The protein resides in the cytoplasm. It catalyses the reaction ATP + H2O + cellular proteinSide 1 = ADP + phosphate + cellular proteinSide 2.. Its function is as follows. Part of the Sec protein translocase complex. Interacts with the SecYEG preprotein conducting channel. Has a central role in coupling the hydrolysis of ATP to the transfer of proteins into and across the cell membrane, serving as an ATP-driven molecular motor driving the stepwise translocation of polypeptide chains across the membrane. In Clostridioides difficile (strain 630) (Peptoclostridium difficile), this protein is Protein translocase subunit SecA 2.